A 152-amino-acid chain; its full sequence is Histone deacetylase complex subunit SAP18 (152 aa).

The disordered stretch occupies residues 1-38 (MAEAARRQGGGRPLPPPPRGVNQQPPRPKPEPVDREKT). Residues 28–38 (PKPEPVDREKT) show a composition bias toward basic and acidic residues.

The protein belongs to the SAP18 family. In terms of assembly, interacts with SIN3, ERF3, ERF4 and HDA19. As to expression, ubiquitous, with low level in flowers.

Links the histone deacetylase complex to transcriptional repressors bound to chromatin. Involved in the tethering of the SIN3 complex to core histone proteins. In Arabidopsis thaliana (Mouse-ear cress), this protein is Histone deacetylase complex subunit SAP18.